The chain runs to 363 residues: DNA replication and repair protein RecF (363 aa).

An ATP-binding site is contributed by Gly-33–Thr-40.

It belongs to the RecF family.

The protein localises to the cytoplasm. In terms of biological role, the RecF protein is involved in DNA metabolism; it is required for DNA replication and normal SOS inducibility. RecF binds preferentially to single-stranded, linear DNA. It also seems to bind ATP. The polypeptide is DNA replication and repair protein RecF (Tropheryma whipplei (strain TW08/27) (Whipple's bacillus)).